A 434-amino-acid chain; its full sequence is Alpha-enolase (434 aa).

N-acetylserine is present on Ser-2. An N6-acetyllysine modification is found at Lys-5. Ser-27 bears the Phosphoserine mark. Positions 31 to 38 (FRAAVPSG) are epitope recognized by CAR and healthy patient antibodies. A Mg(2+)-binding site is contributed by Ser-40. Tyr-44 carries the post-translational modification Phosphotyrosine. The segment at 56-63 (RYMGKGVS) is epitope recognized by CAR antibodies. Position 60 is an N6-acetyllysine; alternate (Lys-60). Lys-60 is modified (N6-succinyllysine; alternate). 2 positions are modified to N6-acetyllysine: Lys-64 and Lys-71. Lys-89 is subject to N6-acetyllysine; alternate. An N6-succinyllysine; alternate modification is found at Lys-89. Lys-92 and Lys-126 each carry N6-acetyllysine. The tract at residues 97–237 (MDGTENKSKF…KTAIGKAGYT (141 aa)) is required for repression of c-myc promoter activity. The substrate site is built by His-158 and Glu-167. Lys-193 and Lys-199 each carry N6-acetyllysine. Lys-202 carries the post-translational modification N6-acetyllysine; alternate. A Glycyl lysine isopeptide (Lys-Gly) (interchain with G-Cter in SUMO2); alternate cross-link involves residue Lys-202. Glu-210 acts as the Proton donor in catalysis. N6-acetyllysine; alternate is present on residues Lys-228 and Lys-233. At Lys-228 the chain carries N6-succinyllysine; alternate. Lys-228 carries the N6-(2-hydroxyisobutyryl)lysine; alternate modification. The residue at position 233 (Lys-233) is an N6-malonyllysine; alternate. Mg(2+) is bound at residue Asp-245. The residue at position 254 (Ser-254) is a Phosphoserine. Lys-256 carries the N6-acetyllysine modification. Phosphoserine is present on residues Ser-263 and Ser-272. Lys-281 carries the N6-acetyllysine; alternate modification. At Lys-281 the chain carries N6-(2-hydroxyisobutyryl)lysine; alternate. At Lys-285 the chain carries N6-acetyllysine. Tyr-287 is subject to Phosphotyrosine. Phosphoserine is present on Ser-291. Residues Glu-293 and Asp-318 each coordinate Mg(2+). Positions 293 and 318 each coordinate substrate. 2 positions are modified to N6-acetyllysine: Lys-335 and Lys-343. Lys-343 serves as the catalytic Proton acceptor. Substrate contacts are provided by residues 370 to 373 (SHRS) and Lys-394. The required for interaction with PLG stretch occupies residues 405–434 (AKYNQLLRIEEELGSKAKFAGRNFRNPLAK). Lys-406 bears the N6-acetyllysine mark. Position 420 is an N6-acetyllysine; alternate (Lys-420). At Lys-420 the chain carries N6-succinyllysine; alternate. Residue Lys-420 is modified to N6-malonyllysine; alternate.

It belongs to the enolase family. Mammalian enolase is composed of 3 isozyme subunits, alpha, beta and gamma, which can form homodimers or heterodimers which are cell-type and development-specific. ENO1 interacts with PLG in the neuronal plasma membrane and promotes its activation. The C-terminal lysine is required for this binding. Isoform MBP-1 interacts with TRAPPC2B. Interacts with ENO4 and PGAM2. Interacts with CMTM6. It depends on Mg(2+) as a cofactor. In terms of processing, ISGylated. Lysine 2-hydroxyisobutyrylation (Khib) by p300/EP300 activates the phosphopyruvate hydratase activity. In terms of tissue distribution, the alpha/alpha homodimer is expressed in embryo and in most adult tissues. The alpha/beta heterodimer and the beta/beta homodimer are found in striated muscle, and the alpha/gamma heterodimer and the gamma/gamma homodimer in neurons.

The protein localises to the cytoplasm. Its subcellular location is the cell membrane. It localises to the myofibril. The protein resides in the sarcomere. It is found in the m line. The protein localises to the nucleus. The enzyme catalyses (2R)-2-phosphoglycerate = phosphoenolpyruvate + H2O. It participates in carbohydrate degradation; glycolysis; pyruvate from D-glyceraldehyde 3-phosphate: step 4/5. Its function is as follows. Glycolytic enzyme the catalyzes the conversion of 2-phosphoglycerate to phosphoenolpyruvate. In addition to glycolysis, involved in various processes such as growth control, hypoxia tolerance and allergic responses. May also function in the intravascular and pericellular fibrinolytic system due to its ability to serve as a receptor and activator of plasminogen on the cell surface of several cell-types such as leukocytes and neurons. Stimulates immunoglobulin production. Binds to the myc promoter and acts as a transcriptional repressor. May be a tumor suppressor. This Homo sapiens (Human) protein is Alpha-enolase (ENO1).